Reading from the N-terminus, the 579-residue chain is MLGTKFILNIFKNKFNNLSTRFIKYVIKSYKRTCPHISDFEPFSSMYYYTGLHNYRTFYLLIKINEIFNINKYKQIYIIVNTDKYDFTTDDIETNKKNRIYLDQRVDIKIRQCDEVIRINLFTTKLTKKVHIGEIKIDINASIISKCFPKNEWFVCIKDGQEVCKVQLSFYKTQKYACPSECMFIHDGLEIWKDKSKSGSTKKIDINNIHKNFDDNDEHLAMIDIDTDINDISLIQKLKLISFVLEQEICVFDFYAYVLKYMYAKEIMGEWFLCFLCFKNNKDQEEINIETIIERNIHRDINIPMLNIQRIVVDKRNNTNANIIYTYQDEKYTLSIHSKKNLYYIIDAITIFTNDLKILKESFGDELEYRKNIIMKENTMKKLMGKRRLSSPRFRKNLPKSTHKMIKEMYDEQDCSHDVKESNTQFFENDMKTNEIKNDNIQTDEIKNDNIQTDEIKNDHIQTDEIKNDNIQTDEIKNDNIQTDEIKNDHIQTDEIKNDNIQTDEIKNDNIQTDEIKNDHIQTDEINNDHIQTDEIKNDHIQTDEIKNDHIQTDEIKNDINTSNEIFFKAQLENTIQNI.

The C2 domain occupies 52–84; it reads LHNYRTFYLLIKINEIFNINKYKQIYIIVNTDK. Tandem repeats lie at residues 442–451, 452–461, 462–471, 472–481, 482–491, 492–501, 502–511, 522–531, 532–541, 542–551, and 552–561. Residues 442-561 are 12 X 10 AA tandem repeat of Q-T-E-I-[K/N]-N-D-[H/N/I][I/N]; the sequence is QTDEIKNDNI…QTDEIKNDIN (120 aa).

The protein localises to the cytoplasmic vesicle. Its subcellular location is the secretory vesicle. It localises to the rhoptry membrane. The protein resides in the cell membrane. It is found in the host cell membrane. In terms of biological role, plays an important role in rhoptry physiology and thus is essential for merozoite invasion of host erythrocytes. The sequence is that of Rhoptry surface protein CERLI2 from Plasmodium falciparum (isolate 3D7).